We begin with the raw amino-acid sequence, 499 residues long: NADH-quinone oxidoreductase subunit N (499 aa).

The next 14 membrane-spanning stretches (helical) occupy residues 16 to 36, 42 to 62, 77 to 97, 109 to 129, 133 to 153, 167 to 187, 208 to 228, 252 to 272, 274 to 294, 302 to 322, 327 to 347, 376 to 396, 411 to 433, and 463 to 483; these read AAFS…LDAF, AIPW…ITHL, GGFV…TILL, YGEV…LGSA, VSIF…TGFI, FLLG…MYGA, LLFW…VSAA, ATKA…VPGG, WQLS…VMAL, LLAY…SAGT, AGAL…FGVM, GSTM…GGFI, TWLV…RVVY, and GTLV…GGVL.

Belongs to the complex I subunit 2 family. As to quaternary structure, NDH-1 is composed of 14 different subunits. Subunits NuoA, H, J, K, L, M, N constitute the membrane sector of the complex.

The protein localises to the cell inner membrane. It catalyses the reaction a quinone + NADH + 5 H(+)(in) = a quinol + NAD(+) + 4 H(+)(out). In terms of biological role, NDH-1 shuttles electrons from NADH, via FMN and iron-sulfur (Fe-S) centers, to quinones in the respiratory chain. The immediate electron acceptor for the enzyme in this species is believed to be a menaquinone. Couples the redox reaction to proton translocation (for every two electrons transferred, four hydrogen ions are translocated across the cytoplasmic membrane), and thus conserves the redox energy in a proton gradient. The polypeptide is NADH-quinone oxidoreductase subunit N (Salinibacter ruber (strain DSM 13855 / M31)).